The chain runs to 721 residues: Cytosolic carboxypeptidase 2 (721 aa).

The interval 43-71 (TASDMINSSSPSESSDSNLEEEQEESKPC) is disordered. The span at 50–59 (SSSPSESSDS) shows a compositional bias: low complexity. The 272-residue stretch at 334 to 605 (YPYTYSKLQH…CFCDTLLDFC (272 aa)) folds into the Peptidase M14 domain. Zn(2+) contacts are provided by His-400, Glu-403, and His-496. The Proton donor/acceptor role is filled by Glu-569. The segment at 645–721 (DIESSTSGSN…TQHGDTEDQS (77 aa)) is disordered. Residues 647–660 (ESSTSGSNSTESDG) are compositionally biased toward low complexity. Residues 672-688 (GKKKLLRSRKERNRLRQ) are compositionally biased toward basic residues. Residues 703–714 (YSCQTLNATTQH) show a composition bias toward polar residues.

Belongs to the peptidase M14 family. The cofactor is Zn(2+).

The protein resides in the cytoplasm. Its subcellular location is the cytosol. The protein localises to the cytoskeleton. It is found in the microtubule organizing center. It localises to the centrosome. The protein resides in the centriole. Its subcellular location is the cilium basal body. It carries out the reaction (L-glutamyl)(n+1)-gamma-L-glutamyl-L-glutamyl-[protein] + H2O = (L-glutamyl)(n)-gamma-L-glutamyl-L-glutamyl-[protein] + L-glutamate. Metallocarboxypeptidase that mediates deglutamylation of target proteins. Catalyzes the deglutamylation of polyglutamate side chains generated by post-translational polyglutamylation in proteins such as tubulins. Also removes gene-encoded polyglutamates from the carboxy-terminus of target proteins such as MYLK. Does not show detyrosinase or deglycylase activities from the carboxy-terminus of tubulin. In terms of biological role, metallocarboxypeptidase that mediates deglutamylation of tubulin and non-tubulin target proteins. Catalyzes the removal of polyglutamate side chains present on the gamma-carboxyl group of glutamate residues within the C-terminal tail of tubulin protein. Specifically cleaves tubulin long-side-chains, while it is not able to remove the branching point glutamate. Also catalyzes the removal of polyglutamate residues from the carboxy-terminus of non-tubulin proteins. The chain is Cytosolic carboxypeptidase 2 (zte25) from Danio rerio (Zebrafish).